The chain runs to 377 residues: Flagellin (377 aa).

Belongs to the bacterial flagellin family.

The protein localises to the secreted. It localises to the bacterial flagellum. In terms of biological role, flagellin is the subunit protein which polymerizes to form the filaments of bacterial flagella. This is Flagellin (fla) from Clostridium tyrobutyricum.